Reading from the N-terminus, the 256-residue chain is 5-keto-4-deoxy-D-glucarate aldolase (256 aa).

His50 (proton acceptor) is an active-site residue. Gln151 lines the substrate pocket. Glu153 contributes to the Mg(2+) binding site. Ser178 and Asp179 together coordinate substrate. Asp179 provides a ligand contact to Mg(2+).

Belongs to the HpcH/HpaI aldolase family. KDGluc aldolase subfamily. In terms of assembly, homohexamer; trimer of dimers. It depends on Mg(2+) as a cofactor.

The catalysed reaction is 5-dehydro-4-deoxy-D-glucarate = 2-hydroxy-3-oxopropanoate + pyruvate. It carries out the reaction 2-dehydro-3-deoxy-D-glucarate = 2-hydroxy-3-oxopropanoate + pyruvate. Its pathway is carbohydrate acid metabolism; galactarate degradation; D-glycerate from galactarate: step 2/3. Its function is as follows. Catalyzes the reversible retro-aldol cleavage of both 5-keto-4-deoxy-D-glucarate and 2-keto-3-deoxy-D-glucarate to pyruvate and tartronic semialdehyde. The polypeptide is 5-keto-4-deoxy-D-glucarate aldolase (Salmonella arizonae (strain ATCC BAA-731 / CDC346-86 / RSK2980)).